Reading from the N-terminus, the 280-residue chain is Vitamin B12-binding protein (280 aa).

An N-terminal signal peptide occupies residues 1–27 (MMPLGLFPLPRAAAVLLISLLTLPAQA). The region spanning 30-277 (RVISLSPSTT…QMASIPTPVA (248 aa)) is the Fe/B12 periplasmic-binding domain. Tyr57 is a cyanocob(III)alamin binding site. A disulfide bond links Cys190 and Cys266.

Belongs to the BtuF family. In terms of assembly, the complex is composed of two ATP-binding proteins (BtuD), two transmembrane proteins (BtuC) and a solute-binding protein (BtuF).

It is found in the periplasm. Its function is as follows. Part of the ABC transporter complex BtuCDF involved in vitamin B12 import. Binds vitamin B12 and delivers it to the periplasmic surface of BtuC. This chain is Vitamin B12-binding protein, found in Yersinia pseudotuberculosis serotype O:3 (strain YPIII).